The following is a 591-amino-acid chain: L-fucose isomerase (591 aa).

Residues Glu337 and Asp361 each act as proton acceptor in the active site. Residues Glu337, Asp361, and His528 each contribute to the Mn(2+) site.

It belongs to the L-fucose isomerase family. As to quaternary structure, homohexamer. The cofactor is Mn(2+).

The protein resides in the cytoplasm. The catalysed reaction is L-fucose = L-fuculose. It participates in carbohydrate degradation; L-fucose degradation; L-lactaldehyde and glycerone phosphate from L-fucose: step 1/3. In terms of biological role, converts the aldose L-fucose into the corresponding ketose L-fuculose. The polypeptide is L-fucose isomerase (Salmonella paratyphi A (strain ATCC 9150 / SARB42)).